The following is a 569-amino-acid chain: F-box/WD repeat-containing protein 5 (569 aa).

One can recognise an F-box domain in the interval 3–49 (EGGMPLLPDSLVYQIFLSLGPADVLAAGLVCRQWQAVSRDEFLWREQ). Residues 90–129 (EHTDQVLHLSFSHSGYQFASCSKDCTVKIWNNDLTISLLH) form a WD 1 repeat. The residue at position 151 (Ser-151) is a Phosphoserine; by PLK4. The D-box motif lies at 308–316 (RRVFDSVLD). WD repeat units follow at residues 470–509 (TPND…CLAK) and 511–551 (RHED…RVLQ).

The protein belongs to the FBXW5 family. Part of the SCF (SKP1-CUL1-F-box) E3 ubiquitin-protein ligase complex SCF(FBXW5) composed of CUL1, SKP1, RBX1 and FBXW5. Component of the DCX(FBXW5) E3 ubiquitin ligase complex, at least composed of (CUL4A or CUL4B), DDB1, FBXW5 and RBX1. Interacts with CDC20, EPS8, TSC1, TSC2 and SASS6. Interacts with TNFAIP8L1; TNFAIP8L1 competes with TSC2 to bind FBXW5 increasing TSC2 stability by preventing its ubiquitination. In terms of processing, phosphorylated at Ser-151 by PLK4 during the G1/S transition, leading to inhibit its ability to ubiquitinate SASS6. Ubiquitinated and degraded by the APC/C complex during mitosis and G1 phase.

It localises to the cytoplasm. Its pathway is protein modification; protein ubiquitination. In terms of biological role, substrate recognition component of both SCF (SKP1-CUL1-F-box protein) and DCX (DDB1-CUL4-X-box) E3 ubiquitin-protein ligase complexes. Substrate recognition component of the SCF(FBXW5) E3 ubiquitin-protein ligase complex which mediates the ubiquitination and subsequent proteasomal degradation of SASS6 during S phase, leading to prevent centriole reduplication. The SCF(FBXW5) complex also mediates ubiquitination and degradation of actin-regulator EPS8 during G2 phase, leading to the transient degradation of EPS8 and subsequent cell shape changes required to allow mitotic progression. Substrate-specific adapter of the DCX(FBXW5) E3 ubiquitin-protein ligase complex which mediates the polyubiquitination and subsequent degradation of TSC2. May also act as a negative regulator of MAP3K7/TAK1 signaling in the interleukin-1B (IL1B) signaling pathway. The sequence is that of F-box/WD repeat-containing protein 5 (Fbxw5) from Rattus norvegicus (Rat).